The sequence spans 96 residues: UPF0235 protein YggU (96 aa).

The protein belongs to the UPF0235 family.

The protein is UPF0235 protein YggU of Salmonella agona (strain SL483).